Consider the following 353-residue polypeptide: Photosystem II protein D1 (353 aa).

Threonine 2 carries the N-acetylthreonine modification. Threonine 2 is modified (phosphothreonine). The next 3 membrane-spanning stretches (helical) occupy residues tyrosine 29–serine 46, histidine 118–leucine 133, and tryptophan 142–alanine 156. Histidine 118 contributes to the chlorophyll a binding site. Tyrosine 126 contributes to the pheophytin a binding site. The [CaMn4O5] cluster site is built by aspartate 170 and glutamate 189. A helical transmembrane segment spans residues phenylalanine 197–leucine 218. Histidine 198 contacts chlorophyll a. Residues histidine 215 and serine 264–phenylalanine 265 contribute to the a quinone site. Residue histidine 215 participates in Fe cation binding. Histidine 272 serves as a coordination point for Fe cation. Residues phenylalanine 274 to leucine 288 traverse the membrane as a helical segment. The [CaMn4O5] cluster site is built by histidine 332, glutamate 333, aspartate 342, and alanine 344. A propeptide spanning residues alanine 345–alanine 353 is cleaved from the precursor.

Belongs to the reaction center PufL/M/PsbA/D family. In terms of assembly, PSII is composed of 1 copy each of membrane proteins PsbA, PsbB, PsbC, PsbD, PsbE, PsbF, PsbH, PsbI, PsbJ, PsbK, PsbL, PsbM, PsbT, PsbX, PsbY, PsbZ, Psb30/Ycf12, at least 3 peripheral proteins of the oxygen-evolving complex and a large number of cofactors. It forms dimeric complexes. The D1/D2 heterodimer binds P680, chlorophylls that are the primary electron donor of PSII, and subsequent electron acceptors. It shares a non-heme iron and each subunit binds pheophytin, quinone, additional chlorophylls, carotenoids and lipids. D1 provides most of the ligands for the Mn4-Ca-O5 cluster of the oxygen-evolving complex (OEC). There is also a Cl(-1) ion associated with D1 and D2, which is required for oxygen evolution. The PSII complex binds additional chlorophylls, carotenoids and specific lipids. serves as cofactor. In terms of processing, tyr-161 forms a radical intermediate that is referred to as redox-active TyrZ, YZ or Y-Z. Post-translationally, C-terminally processed by CTPA; processing is essential to allow assembly of the oxygen-evolving complex and thus photosynthetic growth.

Its subcellular location is the plastid. It is found in the chloroplast thylakoid membrane. The catalysed reaction is 2 a plastoquinone + 4 hnu + 2 H2O = 2 a plastoquinol + O2. Functionally, photosystem II (PSII) is a light-driven water:plastoquinone oxidoreductase that uses light energy to abstract electrons from H(2)O, generating O(2) and a proton gradient subsequently used for ATP formation. It consists of a core antenna complex that captures photons, and an electron transfer chain that converts photonic excitation into a charge separation. The D1/D2 (PsbA/PsbD) reaction center heterodimer binds P680, the primary electron donor of PSII as well as several subsequent electron acceptors. This chain is Photosystem II protein D1, found in Chlamydomonas moewusii (Chlamydomonas eugametos).